The primary structure comprises 279 residues: Urease accessory protein UreD (279 aa).

The protein belongs to the UreD family. In terms of assembly, ureD, UreF and UreG form a complex that acts as a GTP-hydrolysis-dependent molecular chaperone, activating the urease apoprotein by helping to assemble the nickel containing metallocenter of UreC. The UreE protein probably delivers the nickel.

The protein localises to the cytoplasm. Functionally, required for maturation of urease via the functional incorporation of the urease nickel metallocenter. The sequence is that of Urease accessory protein UreD from Trichodesmium erythraeum (strain IMS101).